Reading from the N-terminus, the 316-residue chain is Fe-S cluster assembly protein DRE2 (316 aa).

The tract at residues 7–139 (VSPPKRTLLL…PDYGDNEGAV (133 aa)) is N-terminal SAM-like domain. A linker region spans residues 140–208 (TLKFGLKKKN…EDTLMTEEDL (69 aa)). [2Fe-2S] cluster is bound by residues Cys-218, Cys-229, Cys-232, and Cys-234. Residues 218 to 234 (CQPKAGKRRRACKDCSC) are fe-S binding site A. The [4Fe-4S] cluster site is built by Cys-279, Cys-282, Cys-290, and Cys-293. 2 consecutive short sequence motifs (cx2C motif) follow at residues 279 to 282 (CGNC) and 290 to 293 (CDGC). Residues 279–293 (CGNCSLGDAFRCDGC) are fe-S binding site B.

This sequence belongs to the anamorsin family. Monomer. Interacts with TAH18. Interacts with MIA40. [2Fe-2S] cluster serves as cofactor. Requires [4Fe-4S] cluster as cofactor.

The protein localises to the cytoplasm. It is found in the mitochondrion intermembrane space. Its function is as follows. Component of the cytosolic iron-sulfur (Fe-S) protein assembly (CIA) machinery required for the maturation of extramitochondrial Fe-S proteins. Part of an electron transfer chain functioning in an early step of cytosolic Fe-S biogenesis, facilitating the de novo assembly of a [4Fe-4S] cluster on the scaffold complex CFD1-NBP35. Electrons are transferred to DRE2 from NADPH via the FAD- and FMN-containing protein TAH18. TAH18-DRE2 are also required for the assembly of the diferric tyrosyl radical cofactor of ribonucleotide reductase (RNR), probably by providing electrons for reduction during radical cofactor maturation in the catalytic small subunit RNR2. The protein is Fe-S cluster assembly protein DRE2 of Fusarium vanettenii (strain ATCC MYA-4622 / CBS 123669 / FGSC 9596 / NRRL 45880 / 77-13-4) (Fusarium solani subsp. pisi).